We begin with the raw amino-acid sequence, 245 residues long: tRNA pseudouridine synthase A (245 aa).

The active-site Nucleophile is Asp52. Position 112 (Tyr112) interacts with substrate.

Belongs to the tRNA pseudouridine synthase TruA family. In terms of assembly, homodimer.

The enzyme catalyses uridine(38/39/40) in tRNA = pseudouridine(38/39/40) in tRNA. Formation of pseudouridine at positions 38, 39 and 40 in the anticodon stem and loop of transfer RNAs. The sequence is that of tRNA pseudouridine synthase A from Dictyoglomus turgidum (strain DSM 6724 / Z-1310).